The following is a 166-amino-acid chain: Orofacial cleft 1 candidate gene 1 protein homolog (166 aa).

Residues 1-22 (MDKEKFQQKAVKQTKQKKSTSA) are disordered.

The polypeptide is Orofacial cleft 1 candidate gene 1 protein homolog (Ofcc1) (Mus musculus (Mouse)).